The chain runs to 1070 residues: DNA-directed RNA polymerase subunit beta (1070 aa).

Belongs to the RNA polymerase beta chain family. In terms of assembly, in plastids the minimal PEP RNA polymerase catalytic core is composed of four subunits: alpha, beta, beta', and beta''. When a (nuclear-encoded) sigma factor is associated with the core the holoenzyme is formed, which can initiate transcription.

It is found in the plastid. The catalysed reaction is RNA(n) + a ribonucleoside 5'-triphosphate = RNA(n+1) + diphosphate. DNA-dependent RNA polymerase catalyzes the transcription of DNA into RNA using the four ribonucleoside triphosphates as substrates. The protein is DNA-directed RNA polymerase subunit beta of Cuscuta exaltata (Tall dodder).